The primary structure comprises 106 residues: Large ribosomal subunit protein uL24 (106 aa).

It belongs to the universal ribosomal protein uL24 family. As to quaternary structure, part of the 50S ribosomal subunit.

In terms of biological role, one of two assembly initiator proteins, it binds directly to the 5'-end of the 23S rRNA, where it nucleates assembly of the 50S subunit. Its function is as follows. One of the proteins that surrounds the polypeptide exit tunnel on the outside of the subunit. In Polaromonas sp. (strain JS666 / ATCC BAA-500), this protein is Large ribosomal subunit protein uL24.